The sequence spans 252 residues: SPNSESILQFGDPGTARDFLERESYVISYNRRDRVASWTGEHLTADSLKTGDGVDRDHSKFKEDPDVPSLFRSTLADYSGSGFDRGHMAPAGDAVATQPAMDQTFYLSNMSPQVGIGFNRHYWAYLEGFCRSLTKKFSDVYVFTGPLFLPTKGSDGKYTVTYNVLQGNVAVPTHFYKVILVPQGDNKYAYGAFILPNQAIDTKTPLTNFKVKLTDVEKASGLTFFDKLDVSTLGDLCAATTCAVSSSGGGDA.

The active-site Proton acceptor is H87. N119 lines the Mg(2+) pocket.

This sequence belongs to the DNA/RNA non-specific endonuclease family. Requires Mg(2+) as cofactor. Mn(2+) serves as cofactor.

Its subcellular location is the secreted. Functionally, this enzyme has both RNase and DNase activity. This Cunninghamella echinulata var. echinulata protein is Nuclease C1 (NUC1CE).